The following is a 211-amino-acid chain: MSDPDRARVLAAAGVSRETAERLDLYVAQLRRWQPIKNLVGPATLTEVWSRHIDDALQLLDLAPEARTWLDLGSGAGIPGLILAIAGRERGVRVDLVESNARKCAFLTETARLTEAPARVRNARIEAVIGEYGGTDVVCARALAPMTQLLAWTEPLLKTGTTGLFPKGRDVQAELTQAGAQWRVVNDLVPSRTDSEARIVRVTALAAPSHR.

Residues glycine 73, 125–126 (IE), and arginine 141 contribute to the S-adenosyl-L-methionine site.

Belongs to the methyltransferase superfamily. RNA methyltransferase RsmG family.

The protein localises to the cytoplasm. The catalysed reaction is guanosine(527) in 16S rRNA + S-adenosyl-L-methionine = N(7)-methylguanosine(527) in 16S rRNA + S-adenosyl-L-homocysteine. In terms of biological role, specifically methylates the N7 position of guanine in position 527 of 16S rRNA. This is Ribosomal RNA small subunit methyltransferase G from Methylobacterium radiotolerans (strain ATCC 27329 / DSM 1819 / JCM 2831 / NBRC 15690 / NCIMB 10815 / 0-1).